The chain runs to 1313 residues: Restriction of telomere capping protein 1 (1313 aa).

Polar residues predominate over residues 1-17 (MSNYSCPRTHNKSNMSG). 2 disordered regions span residues 1-22 (MSNY…NEVK) and 38-83 (NSIH…QQLM). A compositionally biased stretch (low complexity) spans 57-69 (YSFGSINSSNSSY). The segment covering 70–83 (DRSRDPSSVEQQLM) has biased composition (basic and acidic residues). 8 WD repeats span residues 180–221 (IKLS…NIDN), 229–269 (EHSR…LSGS), 339–378 (AHTG…NDAP), 442–484 (GEEA…NTDR), 711–752 (SQVD…ALST), 795–837 (QHKV…LLWD), 1100–1143 (SPKE…KQLF), and 1190–1229 (LFEI…LIVN). The RING-type; degenerate zinc finger occupies 1267-1309 (CVLCEKPMKKLVMCVLACGHEGHFQCLRDWFLNEGMNECPAGD).

It belongs to the WD repeat RTC1 family.

The protein resides in the vacuole. In terms of biological role, may be involved in a process influencing telomere capping. This is Restriction of telomere capping protein 1 (RTC1) from Vanderwaltozyma polyspora (strain ATCC 22028 / DSM 70294 / BCRC 21397 / CBS 2163 / NBRC 10782 / NRRL Y-8283 / UCD 57-17) (Kluyveromyces polysporus).